The following is a 601-amino-acid chain: Glutathione-regulated potassium-efflux system protein KefB (601 aa).

13 helical membrane passes run 4–24, 29–49, 55–75, 87–107, 111–131, 152–172, 177–197, 207–227, 230–250, 262–282, 284–304, 324–344, and 356–376; these read ADLLTAGVLFLFAAVAAVPLA, IGAVLGYLLAGIAIGPWGLGF, EILHFSELGVVFLMFIIGLEL, IFGVGAAQVLLSAAVLAGLLM, FLWQAAVVGGIGLAMSSTAMA, VLLFQDLAVIPALALVPLLAG, HFDWFKVAMKVLAFAVMLIGG, FIAASGVREVFTAATLLLVLS, LFMDALGLSMALGTFIAGVLL, AIDPFKGLLLGLFFISVGMSL, LGVLYTHLLWVAASVVILVVI, MQFASVLSQGGEFAFVLFSTA, and ALLLVTVTLSMMTTPLLMKGI. The 120-residue stretch at 400-519 folds into the RCK N-terminal domain; sequence KPQVIVVGFG…AGVTQFSRET (120 aa).

It belongs to the monovalent cation:proton antiporter 2 (CPA2) transporter (TC 2.A.37) family. KefB subfamily. In terms of assembly, interacts with the regulatory subunit KefG.

It localises to the cell inner membrane. Its function is as follows. Pore-forming subunit of a potassium efflux system that confers protection against electrophiles. Catalyzes K(+)/H(+) antiport. The sequence is that of Glutathione-regulated potassium-efflux system protein KefB from Salmonella paratyphi B (strain ATCC BAA-1250 / SPB7).